Reading from the N-terminus, the 235-residue chain is Small ribosomal subunit protein eS4 (235 aa).

Positions 37–100 constitute an S4 RNA-binding domain; sequence LPLGIIIRDI…NEAYRMLQDE (64 aa).

This sequence belongs to the eukaryotic ribosomal protein eS4 family.

This Methanosarcina acetivorans (strain ATCC 35395 / DSM 2834 / JCM 12185 / C2A) protein is Small ribosomal subunit protein eS4.